Reading from the N-terminus, the 144-residue chain is Large ribosomal subunit protein uL15 (144 aa).

The tract at residues 1 to 53 is disordered; that stretch reads MRLNSLSPAEGAKHSAKRLGRGIGSGLGKTGGRGHKGQKSRTGGGVRRGFEGG. Residues 21-31 show a composition bias toward gly residues; sequence RGIGSGLGKTG.

The protein belongs to the universal ribosomal protein uL15 family. In terms of assembly, part of the 50S ribosomal subunit.

Its function is as follows. Binds to the 23S rRNA. The polypeptide is Large ribosomal subunit protein uL15 (Glaesserella parasuis serovar 5 (strain SH0165) (Haemophilus parasuis)).